The primary structure comprises 548 residues: Probable delta-1-pyrroline-5-carboxylate dehydrogenase (548 aa).

Residue glutamate 298 is the Proton acceptor of the active site. The Nucleophile role is filled by cysteine 332. Phosphoserine occurs at positions 391, 394, and 396.

The protein belongs to the aldehyde dehydrogenase family.

It catalyses the reaction L-glutamate 5-semialdehyde + NAD(+) + H2O = L-glutamate + NADH + 2 H(+). Its pathway is amino-acid degradation; L-proline degradation into L-glutamate; L-glutamate from L-proline: step 2/2. The chain is Probable delta-1-pyrroline-5-carboxylate dehydrogenase from Schizosaccharomyces pombe (strain 972 / ATCC 24843) (Fission yeast).